Consider the following 399-residue polypeptide: Enoyl-[acyl-carrier-protein] reductase [NADH] (399 aa).

NAD(+) contacts are provided by residues glycine 48–tyrosine 53, phenylalanine 74–glutamate 75, aspartate 111–alanine 112, and leucine 139–alanine 140. Tyrosine 225 is a binding site for substrate. Tyrosine 235 serves as the catalytic Proton donor. Residues lysine 244 and valine 274–threonine 276 each bind NAD(+).

It belongs to the TER reductase family. As to quaternary structure, monomer.

It catalyses the reaction a 2,3-saturated acyl-[ACP] + NAD(+) = a (2E)-enoyl-[ACP] + NADH + H(+). It participates in lipid metabolism; fatty acid biosynthesis. In terms of biological role, involved in the final reduction of the elongation cycle of fatty acid synthesis (FAS II). Catalyzes the reduction of a carbon-carbon double bond in an enoyl moiety that is covalently linked to an acyl carrier protein (ACP). The polypeptide is Enoyl-[acyl-carrier-protein] reductase [NADH] (Yersinia enterocolitica serotype O:8 / biotype 1B (strain NCTC 13174 / 8081)).